Reading from the N-terminus, the 823-residue chain is Aminopeptidase O (823 aa).

His-481 is a Zn(2+) binding site. Glu-482 acts as the Proton acceptor in catalysis. Zn(2+) is bound by residues His-485 and Glu-504. The Nucleolar localization signal signature appears at 693-703 (RRPRKRKRGKR).

This sequence belongs to the peptidase M1 family. Requires Zn(2+) as cofactor. In terms of tissue distribution, expressed in testis, heart, brain, lung, liver, skeletal muscle, kidney and ovary. Expressed in vascular tissues.

It is found in the nucleus. It localises to the nucleolus. The protein resides in the cytoplasm. Its function is as follows. Aminopeptidase which catalyzes the hydrolysis of amino acid residues from the N-terminus of peptide or protein substrates. In Mus musculus (Mouse), this protein is Aminopeptidase O (Aopep).